A 274-amino-acid polypeptide reads, in one-letter code: uncharacterized protein (274 aa).

The signal sequence occupies residues 1-30 (MTIDTPAREDQTLAATHRAMWALGDYALMA).

To M.tuberculosis Rv1403c.

This is an uncharacterized protein from Mycobacterium bovis (strain ATCC BAA-935 / AF2122/97).